The following is a 106-amino-acid chain: N(2)-fixation sustaining protein CowN (106 aa).

The protein belongs to the CowN family.

Is required to sustain N(2)-dependent growth in the presence of low levels of carbon monoxide (CO). Probably acts by protecting the N(2) fixation ability of the nitrogenase complex, which is inactivated in the presence of CO. In Denitrovibrio acetiphilus (strain DSM 12809 / NBRC 114555 / N2460), this protein is N(2)-fixation sustaining protein CowN.